Consider the following 534-residue polypeptide: Protoheme IX farnesyltransferase (534 aa).

Residues 1–251 (MRREHARAIL…VLLEGKPSLL (251 aa)) are unknown. 15 consecutive transmembrane segments (helical) span residues 17–37 (PWLL…GGIV), 39–59 (ALTG…ALAI), 83–103 (YLTL…FGAI), 128–148 (LALA…ALAV), 163–183 (VAWA…QVLL), 197–217 (LMHL…TTLA), 261–281 (GVIS…PAGI), 284–304 (LSLV…SHSI), 339–359 (IALG…LAAI), 360–380 (LALA…KRTS), 384–404 (IVIG…AVTG), 411–431 (LLLW…LALI), 457–477 (IVIY…LGML), 479–499 (WAYL…ALKL), and 508–528 (AWAL…AMAV). A protoheme IX prenyltransferase region spans residues 252–530 (KDYISLTKPG…ILFVAMAVDR (279 aa)).

This sequence in the C-terminal section; belongs to the UbiA prenyltransferase family. Protoheme IX farnesyltransferase subfamily.

It is found in the cell membrane. The enzyme catalyses heme b + (2E,6E)-farnesyl diphosphate + H2O = Fe(II)-heme o + diphosphate. It functions in the pathway porphyrin-containing compound metabolism; heme O biosynthesis; heme O from protoheme: step 1/1. Functionally, converts heme B (protoheme IX) to heme O by substitution of the vinyl group on carbon 2 of heme B porphyrin ring with a hydroxyethyl farnesyl side group. The sequence is that of Protoheme IX farnesyltransferase (ctaB) from Roseiflexus sp. (strain RS-1).